Consider the following 312-residue polypeptide: MKIDVSRLSAAVNDAHARHAQAPGGANASYIPYLAKVPSHLAGVAAVTVDGDQVVAGDADYAFAIESISKVCSLVQALEDHGPDAVREKIGADPTGLPFNSVMALALHDGKPLSPLVNAGAIATVSFLKAANAEERWKKILAMQSALAGADIALSDEVNQSEQTTNFHNRAIAWLLYSASTMYSDPMEACEVYTRQCSTLFTARHLATMAATLAAKGRNPLTGKQVLKPEHVPSVLAEMMMEGLYERSGDWAYMVGLPGKSGVGGGIMAVVPGVMGLAAFSPPLDPAGNSVRGQLMVADVARTLGLNLFDRA.

Residues Ser-67, Asn-118, Glu-162, Asn-169, Tyr-193, Tyr-245, and Val-263 each coordinate substrate.

It belongs to the glutaminase family. Homotetramer.

The catalysed reaction is L-glutamine + H2O = L-glutamate + NH4(+). In Bordetella avium (strain 197N), this protein is Glutaminase.